A 180-amino-acid chain; its full sequence is Trafficking protein particle complex subunit 3 (180 aa).

The S-palmitoyl cysteine moiety is linked to residue Cys68.

The protein belongs to the TRAPP small subunits family. BET3 subfamily. Homodimer. Component of the multisubunit transport protein particle (TRAPP) complex, which includes at least TRAPPC2, TRAPPC2L, TRAPPC3, TRAPPC3L, TRAPPC4, TRAPPC5, TRAPPC8, TRAPPC9, TRAPPC10, TRAPPC11 and TRAPPC12. Heterodimer with TRAPPC6A. The heterodimer TRAPPC3-TRAPPC6A interacts with TRAPPC2L. Heterodimer with TRAPPC6b. The heterodimer TRAPPC6B-TRAPPC3 interacts with TRAPPC1 likely providing a core for TRAPP complex formation. In terms of tissue distribution, widely expressed. Expressed in lung, heart, liver, spleen, brain and kidney.

The protein resides in the golgi apparatus. The protein localises to the cis-Golgi network. It localises to the endoplasmic reticulum. May play a role in vesicular transport from endoplasmic reticulum to Golgi. This chain is Trafficking protein particle complex subunit 3, found in Mus musculus (Mouse).